The sequence spans 392 residues: WD repeat-containing protein GTS1 (392 aa).

WD repeat units lie at residues 81–124 (GHSD…QVSR), 128–167 (GNDQEIFSFSYGGAADNLLAGGCKEQVLLWDWRNSKQVAC), 171–211 (SHMD…NDDD), and 323–368 (GHID…TEIN).

In terms of tissue distribution, expressed in germinating seeds, rosettes leaves, flowers and siliques.

Its function is as follows. Involved in the control of plant growth development. Acts as negative regulator of seed germination, cell division in meristematic regions, plant growth and overall biomass accumulation. May function by regulating ribosome activities and biogenesis in plant cells. This is WD repeat-containing protein GTS1 from Arabidopsis thaliana (Mouse-ear cress).